A 300-amino-acid chain; its full sequence is MRAHYSYLKGDNVAVAQCPASCGELIQGWILGSEKLVSCPVDWYSTVAVTAAPPLINERPLSRAMVERVLAHWQYPAHWSNEIRVDVRSSIPVAKGMASSTADIAATAVATAHHLGHSLDETTLAQLCVSIEPTDSTVFHQLTLFDHNNAATQIACEPPPPIDLLVLESPVTLRTQDYHRLPRQQKLIASSATLQQAWNLVQEACITQNPLRLGEAATLSAIASQTLLPKPGFTALLSLVEECDLYGLNVAHSGSVVGLMLDRKRHDIARLKGKLAEKKLTRHWPKQHLLKMVTGGVKLQ.

Residue 92–102 participates in ATP binding; it reads PVAKGMASSTA.

The protein belongs to the GHMP kinase family. PduX subfamily.

The protein localises to the cytoplasm. The enzyme catalyses L-threonine + ATP = O-phospho-L-threonine + ADP + H(+). The protein operates within cofactor biosynthesis; adenosylcobalamin biosynthesis. It participates in polyol metabolism; 1,2-propanediol degradation. In terms of biological role, L-threonine kinase that catalyzes the conversion of L-threonine to L-threonine-O-3-phosphate. Involved in the de novo synthesis of adenosylcobalamin (coenzyme B12) and the assimilation of cobyric acid. Uses ATP; the activity with CTP, GTP or UTP is 6, 11, and 3% of the activity with ATP, respectively. The 1,2-propanediol (1,2-PD)-specific bacterial microcompartment (BMC) concentrates low levels of 1,2-PD catabolic enzymes, concentrates volatile reaction intermediates thus enhancing pathway flux and keeps the level of toxic, mutagenic propionaldehyde low. This gene probably benefits from its induction via the Pdu promoter, rather than a physical interaction with the BMC. This is L-threonine kinase from Salmonella typhimurium (strain LT2 / SGSC1412 / ATCC 700720).